Reading from the N-terminus, the 466-residue chain is F-box/LRR-repeat protein fbxl-1 (466 aa).

In terms of domain architecture, F-box spans 54–100 (SLINRVLPKEVLLKVFSFLDTKALCRSAQVCRSWSILALDGSNWQRV). 11 LRR repeats span residues 122 to 147 (GGFL…FTSR), 148 to 173 (CPNL…LGRY), 174 to 199 (CHKL…IGDG), 200 to 225 (CPNL…ILSN), 226 to 251 (CKSL…VEAH), 252 to 277 (MGAI…IANG), 278 to 303 (ATAL…LGQH), 304 to 329 (SHNL…LARG), 330 to 355 (CRQL…LANN), 356 to 381 (CTAL…LASK), and 408 to 433 (CKAL…FQHH).

As to quaternary structure, component of the SCF (SKP1-CUL1-F-box protein)-type E3 ubiquitin ligase complex. As to expression, expressed in neuroglial cells such as the socket cell and sheath cell, neurosecretory motor neurons and regions around the pharynx and anus.

The protein localises to the perikaryon. Its subcellular location is the cell projection. It localises to the dendrite. It is found in the cilium. The protein resides in the axon. Functionally, substrate-recognition component of the SCF (SKP1-CUL1-F-box protein)-type E3 ubiquitin ligase complex. Plays a role in regulating the entry into the dauer state. In hermaphrodites, may play a role in modulating the rate of defecation. This is F-box/LRR-repeat protein fbxl-1 from Caenorhabditis elegans.